We begin with the raw amino-acid sequence, 137 residues long: Small ribosomal subunit protein eS6 (137 aa).

Over residues 114-127 (LPVEEAPAEDAPES) the composition is skewed to acidic residues. The interval 114-137 (LPVEEAPAEDAPESAEEKSEDKKE) is disordered. Over residues 128 to 137 (AEEKSEDKKE) the composition is skewed to basic and acidic residues.

It belongs to the eukaryotic ribosomal protein eS6 family.

This is Small ribosomal subunit protein eS6 from Nitrosopumilus maritimus (strain SCM1).